We begin with the raw amino-acid sequence, 288 residues long: 33 kDa chaperonin (288 aa).

2 disulfides stabilise this stretch: cysteine 235–cysteine 237 and cysteine 268–cysteine 271.

This sequence belongs to the HSP33 family. Under oxidizing conditions two disulfide bonds are formed involving the reactive cysteines. Under reducing conditions zinc is bound to the reactive cysteines and the protein is inactive.

It localises to the cytoplasm. In terms of biological role, redox regulated molecular chaperone. Protects both thermally unfolding and oxidatively damaged proteins from irreversible aggregation. Plays an important role in the bacterial defense system toward oxidative stress. This is 33 kDa chaperonin from Streptococcus thermophilus (strain ATCC BAA-250 / LMG 18311).